A 541-amino-acid polypeptide reads, in one-letter code: Putative nucleobase-ascorbate transporter 10 (541 aa).

12 helical membrane passes run 52 to 72 (LLSLGITVLIPSVLVPLMGGG), 79 to 99 (VIQTLLFVSGLTTLFQSFFGT), 101 to 121 (LPVIAVASYAYIIPITSIIYS), 141 to 161 (IQGALIITGCFQVLICILGVW), 173 to 193 (IAPLATFTGLGLYHIGFPLLA), 196 to 216 (VEVGLPGLILLIFVTQYLPRF), 235 to 255 (GMILCIPLVWLFAQLLTSSGV), 299 to 319 (SFAMMAASFVTLFESTGLFYA), 376 to 396 (RVIQISAAFMIFFSIFGKFGA), 397 to 417 (FFASIPLPIMASLYCIVLCFV), 433 to 453 (FNIKFILGFSFFMAISIPQYF), and 476 to 496 (VIFMSHTTVAAIIAIVLDCTL).

This sequence belongs to the nucleobase:cation symporter-2 (NCS2) (TC 2.A.40) family.

It is found in the membrane. The sequence is that of Putative nucleobase-ascorbate transporter 10 (NAT10) from Arabidopsis thaliana (Mouse-ear cress).